We begin with the raw amino-acid sequence, 131 residues long: Sec-independent protein translocase protein TatB (131 aa).

The chain crosses the membrane as a helical span at residues leucine 2–glycine 22. Positions alanine 96 to threonine 131 are disordered. Over residues glutamine 107–proline 116 the composition is skewed to pro residues.

The protein belongs to the TatB family. As to quaternary structure, the Tat system comprises two distinct complexes: a TatABC complex, containing multiple copies of TatA, TatB and TatC subunits, and a separate TatA complex, containing only TatA subunits. Substrates initially bind to the TatABC complex, which probably triggers association of the separate TatA complex to form the active translocon.

The protein localises to the cell membrane. Functionally, part of the twin-arginine translocation (Tat) system that transports large folded proteins containing a characteristic twin-arginine motif in their signal peptide across membranes. Together with TatC, TatB is part of a receptor directly interacting with Tat signal peptides. TatB may form an oligomeric binding site that transiently accommodates folded Tat precursor proteins before their translocation. This is Sec-independent protein translocase protein TatB from Mycolicibacterium paratuberculosis (strain ATCC BAA-968 / K-10) (Mycobacterium paratuberculosis).